The following is a 616-amino-acid chain: Dihydroxy-acid dehydratase (616 aa).

Mg(2+) is bound at residue aspartate 81. Cysteine 122 contacts [2Fe-2S] cluster. Mg(2+) is bound by residues aspartate 123 and lysine 124. Lysine 124 bears the N6-carboxylysine mark. Cysteine 195 contributes to the [2Fe-2S] cluster binding site. Glutamate 491 contributes to the Mg(2+) binding site. Serine 517 serves as the catalytic Proton acceptor.

The protein belongs to the IlvD/Edd family. As to quaternary structure, homodimer. It depends on [2Fe-2S] cluster as a cofactor. The cofactor is Mg(2+).

The enzyme catalyses (2R)-2,3-dihydroxy-3-methylbutanoate = 3-methyl-2-oxobutanoate + H2O. It catalyses the reaction (2R,3R)-2,3-dihydroxy-3-methylpentanoate = (S)-3-methyl-2-oxopentanoate + H2O. The protein operates within amino-acid biosynthesis; L-isoleucine biosynthesis; L-isoleucine from 2-oxobutanoate: step 3/4. Its pathway is amino-acid biosynthesis; L-valine biosynthesis; L-valine from pyruvate: step 3/4. Its function is as follows. Functions in the biosynthesis of branched-chain amino acids. Catalyzes the dehydration of (2R,3R)-2,3-dihydroxy-3-methylpentanoate (2,3-dihydroxy-3-methylvalerate) into 2-oxo-3-methylpentanoate (2-oxo-3-methylvalerate) and of (2R)-2,3-dihydroxy-3-methylbutanoate (2,3-dihydroxyisovalerate) into 2-oxo-3-methylbutanoate (2-oxoisovalerate), the penultimate precursor to L-isoleucine and L-valine, respectively. The sequence is that of Dihydroxy-acid dehydratase from Escherichia coli O157:H7 (strain EC4115 / EHEC).